Here is a 298-residue protein sequence, read N- to C-terminus: Ethanolamine ammonia-lyase small subunit (298 aa).

Residues Val210, Glu231, and Cys261 each contribute to the adenosylcob(III)alamin site.

The protein belongs to the EutC family. As to quaternary structure, the basic unit is a heterodimer which dimerizes to form tetramers. The heterotetramers trimerize; 6 large subunits form a core ring with 6 small subunits projecting outwards. The cofactor is adenosylcob(III)alamin.

It is found in the bacterial microcompartment. It carries out the reaction ethanolamine = acetaldehyde + NH4(+). It participates in amine and polyamine degradation; ethanolamine degradation. Catalyzes the deamination of various vicinal amino-alcohols to oxo compounds. Allows this organism to utilize ethanolamine as the sole source of nitrogen and carbon in the presence of external vitamin B12. This chain is Ethanolamine ammonia-lyase small subunit, found in Salmonella typhi.